The following is an 853-amino-acid chain: Deubiquitinase otu (853 aa).

A disordered region spans residues Met-1–Tyr-20. In terms of domain architecture, OTU spans Leu-29–Val-150. The active site involves Asp-37. Residue Ser-40 is the Nucleophile of the active site. His-143 is a catalytic residue. Residues Asn-336–Pro-396 enclose the Tudor domain. The segment at Pro-396 to His-853 is LC domain. The span at Gln-460–Pro-470 shows a compositional bias: basic and acidic residues. Disordered stretches follow at residues Gln-460–Met-531, Ala-681–Ser-704, Gly-732–Gly-794, and Asn-817–His-853. A compositionally biased stretch (low complexity) spans Ser-499–Ser-517. Positions Asn-747–Ser-758 are enriched in polar residues. The span at Leu-769–Ile-778 shows a compositional bias: pro residues. Composition is skewed to low complexity over residues Ala-783–Gly-794 and Pro-820–Ser-838.

Self aggregates, forming amyloid-like fibrillar helical structures; protein aggregation is mediated by the C-terminal LC domain, is enhanced by RNA binding and is essential for deubiquitinase activity. Interacts (via OTU domain) with bam (via C-terminus); the interaction enhances otu aggregation and deubiquitinase activity. Together with bam interacts with CycA/cyclin-A; the interaction stabilizes CycA by promoting its deubiquitination. Together with bam interacts with Traf6. Interacts with Hrb27C; the interaction is RNA-independent. Associates (via N-terminus) with mRNP complexes; the interaction is weak. As to expression, expressed at high levels in the ovary, at low levels in the brain and fat body, and at moderate levels in the gut.

It is found in the cytoplasm. The protein localises to the cell cortex. The protein resides in the perinuclear region. With respect to regulation, activated by protein aggregation, which is mediated by the LC domain and enhanced by RNA binding. Its function is as follows. Catalytic component of a deubiquitinase complex consisting of bam and otu. The complex deubiquitinates K63-linked polyubiquitinated proteins; this antagonizes the ubiquitination activity of Traf6 and regulates the IMD immune signaling pathway. Otu-bam deubiquitinase activity is regulated by Traf6 dependent immune signaling regulation of bam expression levels; this forms a feedback loop that regulates the IMD immune signaling pathway and balances gut immune activity during aging. The complex deubiquitinates and stabilizes CycA/cyclin-A to regulate CycA-dependent differentiation. Involved in grk mRNA localization to the dorsal anterior region of the oocyte required for dorsal-ventral axis determination; may function as a ribonuclear protein complex together with sqd and Hrb27C. May regulate actin cytoskeleton organization in differentiating cystocytes during fusome maturation; required for efficient nurse cell cytoplasmic dumping during oogenesis. Essential for female fertility; involved in germ cell proliferation and germ cell differentiation. Involved in the early stages of germ cell proliferation and differentiation during oogenesis. Required for polytene chromosome dispersal in nurse cells during oogenesis. In terms of biological role, involved in the later stages of germ cell proliferation and differentiation during oogenesis. The polypeptide is Deubiquitinase otu (Drosophila melanogaster (Fruit fly)).